A 225-amino-acid polypeptide reads, in one-letter code: Cytochrome b6-f complex iron-sulfur subunit, chloroplastic (225 aa).

A chloroplast-targeting transit peptide spans 1–46 (MASTALSTASNPTQLCRSRASLGKPVKGLGFGRERVPRTATTITCQ). The chain crosses the membrane as a helical span at residues 69–89 (LLGAISLPTVGMLVPYGAFFI). In terms of domain architecture, Rieske spans 112–208 (AEEWLKTHGP…ADVDDGKVLF (97 aa)). Residues Cys-154, His-156, Cys-172, and His-175 each contribute to the [2Fe-2S] cluster site. Cys-159 and Cys-174 form a disulfide bridge.

The protein belongs to the Rieske iron-sulfur protein family. As to quaternary structure, the 4 large subunits of the cytochrome b6-f complex are cytochrome b6, subunit IV (17 kDa polypeptide, petD), cytochrome f and the Rieske protein, while the 4 small subunits are petG, petL, petM and petN. The complex functions as a dimer. The cofactor is [2Fe-2S] cluster.

It localises to the plastid. It is found in the chloroplast thylakoid membrane. The enzyme catalyses 2 oxidized [plastocyanin] + a plastoquinol + 2 H(+)(in) = 2 reduced [plastocyanin] + a plastoquinone + 4 H(+)(out). In terms of biological role, component of the cytochrome b6-f complex, which mediates electron transfer between photosystem II (PSII) and photosystem I (PSI), cyclic electron flow around PSI, and state transitions. The chain is Cytochrome b6-f complex iron-sulfur subunit, chloroplastic (petC) from Oryza sativa subsp. japonica (Rice).